A 178-amino-acid polypeptide reads, in one-letter code: Mediator of RNA polymerase II transcription subunit 28 (178 aa).

Residues 1–44 (MAAPLGGMFSGQPPGPPQAPPGLPGQASLLQAAPGAPRPSSSTL) are disordered. Over residues 13–23 (PPGPPQAPPGL) the composition is skewed to pro residues. A coiled-coil region spans residues 109–145 (QVIKEDVSELRNELQRKDALVQKHLTKLRHWQQVLED).

This sequence belongs to the Mediator complex subunit 28 family. As to quaternary structure, component of the Mediator complex, which is composed of MED1, MED4, MED6, MED7, MED8, MED9, MED10, MED11, MED12, MED13, MED13L, MED14, MED15, MED16, MED17, MED18, MED19, MED20, MED21, MED22, MED23, MED24, MED25, MED26, MED27, MED29, MED30, MED31, CCNC, CDK8 and CDC2L6/CDK11. The MED12, MED13, CCNC and CDK8 subunits form a distinct module termed the CDK8 module. Mediator containing the CDK8 module is less active than Mediator lacking this module in supporting transcriptional activation. Individual preparations of the Mediator complex lacking one or more distinct subunits have been variously termed ARC, CRSP, DRIP, PC2, SMCC and TRAP. Forms a ternary complex with NF2/merlin and GRB2. Binds to actin. As to expression, widely expressed. Highly expressed in vascular tissues such as placenta, testis and liver.

It localises to the nucleus. The protein localises to the cytoplasm. The protein resides in the membrane. Component of the Mediator complex, a coactivator involved in the regulated transcription of nearly all RNA polymerase II-dependent genes. Mediator functions as a bridge to convey information from gene-specific regulatory proteins to the basal RNA polymerase II transcription machinery. Mediator is recruited to promoters by direct interactions with regulatory proteins and serves as a scaffold for the assembly of a functional preinitiation complex with RNA polymerase II and the general transcription factors. May be part of a complex containing NF2/merlin that participates in cellular signaling to the actin cytoskeleton downstream of tyrosine kinase signaling pathways. The polypeptide is Mediator of RNA polymerase II transcription subunit 28 (MED28) (Homo sapiens (Human)).